A 440-amino-acid chain; its full sequence is Thymidine phosphorylase (440 aa).

It belongs to the thymidine/pyrimidine-nucleoside phosphorylase family. In terms of assembly, homodimer.

The catalysed reaction is thymidine + phosphate = 2-deoxy-alpha-D-ribose 1-phosphate + thymine. The protein operates within pyrimidine metabolism; dTMP biosynthesis via salvage pathway; dTMP from thymine: step 1/2. Its function is as follows. The enzymes which catalyze the reversible phosphorolysis of pyrimidine nucleosides are involved in the degradation of these compounds and in their utilization as carbon and energy sources, or in the rescue of pyrimidine bases for nucleotide synthesis. The protein is Thymidine phosphorylase of Salmonella schwarzengrund (strain CVM19633).